The primary structure comprises 536 residues: 2-isopropylmalate synthase (536 aa).

One can recognise a Pyruvate carboxyltransferase domain in the interval 8–273 (VLIFDTTLRD…FFGRDPESPT (266 aa)). Positions 17, 208, 210, and 244 each coordinate Mn(2+). A regulatory domain region spans residues 408–536 (QLQLVQVSCG…PQHDLIKANL (129 aa)).

The protein belongs to the alpha-IPM synthase/homocitrate synthase family. LeuA type 1 subfamily. As to quaternary structure, homodimer. The cofactor is Mn(2+).

It is found in the cytoplasm. The enzyme catalyses 3-methyl-2-oxobutanoate + acetyl-CoA + H2O = (2S)-2-isopropylmalate + CoA + H(+). It participates in amino-acid biosynthesis; L-leucine biosynthesis; L-leucine from 3-methyl-2-oxobutanoate: step 1/4. In terms of biological role, catalyzes the condensation of the acetyl group of acetyl-CoA with 3-methyl-2-oxobutanoate (2-ketoisovalerate) to form 3-carboxy-3-hydroxy-4-methylpentanoate (2-isopropylmalate). In Prochlorococcus marinus (strain MIT 9211), this protein is 2-isopropylmalate synthase.